The following is a 1549-amino-acid chain: Structural maintenance of chromosomes protein 4 (1549 aa).

The segment at 1–78 (MPPKTSAAPP…LFSLQLPSRP (78 aa)) is disordered. Residues 26-36 (KPQKKTTKPVN) show a composition bias toward basic residues. The span at 37–59 (RHKEGSKDPEEELQRAVNEKFDG) shows a compositional bias: basic and acidic residues. Residue 121–128 (GPNGSGKS) participates in ATP binding. Residues 326 to 604 (MKLEQRRRQR…QNSSCSSSNK (279 aa)) adopt a coiled-coil conformation. 2 stretches are compositionally biased toward basic and acidic residues: residues 396–407 (LSDLGTEETRRK) and 420–444 (AEAE…AERK). 2 disordered regions span residues 396 to 444 (LSDL…AERK) and 460 to 485 (KTAN…EEQK). The 116-residue stretch at 619–734 (KSFHGRLGDL…GDSTQEAQRM (116 aa)) folds into the SMC hinge domain. Coiled coils occupy residues 786-1058 (KAAE…KVNR) and 1144-1182 (EKIN…SIKA). Residues 1440–1459 (IQTTRDVTSRPQSKATTSGD) are compositionally biased toward polar residues. The interval 1440–1549 (IQTTRDVTSR…AIVDDDDDME (110 aa)) is disordered. Residues 1460–1474 (GTERPASRSASRPES) show a composition bias toward basic and acidic residues. Over residues 1510–1523 (TPPSKRSNSASTPK) the composition is skewed to polar residues.

This sequence belongs to the SMC family. SMC4 subfamily. In terms of assembly, component of the condensin I complex, which contains the mix-1/SMC2 and smc-4/SMC4 heterodimer, and three non SMC subunits that probably regulate the complex: dpy-26, capg-1 and dpy-28. Within the complex, interacts with mix-1, dpy-26, capg-1 and dpy-28. Component of the condensin II complex, which contains the mix-1/SMC2 and smc-4/SMC4 heterodimer, and three non SMC subunits, kle-2, capg-2 and hcp-6 that probably regulate the complex. Within the complex, interacts with mix-1, kle-2, capg-2 and hcp-6. Interacts with smcl-1.

The protein localises to the nucleus. It is found in the chromosome. Central component of the condensin I complex, a complex required for conversion of interphase chromatin into mitotic-like condense chromosomes. The condensin I complex introduces positive supercoils into relaxed DNA in the presence of type I topoisomerases. Converts nicked DNA into positive knotted forms in the presence of type II topoisomerases. Also a central component of the condensin II complex, a complex that seems to play a role in prophase chromosome condensation. Both the condensin complex I and II play a role in meiotic and mitotic chromosome segregation. Plays a role in robust cytokinesis upon the presence of chromatin obstructions. This chain is Structural maintenance of chromosomes protein 4 (smc-4), found in Caenorhabditis elegans.